The primary structure comprises 129 residues: Lysozyme C (129 aa).

A C-type lysozyme domain is found at 1–129 (KVYGRCELAA…VHAWIRGCRL (129 aa)). 4 cysteine pairs are disulfide-bonded: cysteine 6–cysteine 127, cysteine 30–cysteine 115, cysteine 64–cysteine 80, and cysteine 76–cysteine 94. Residues glutamate 35 and aspartate 52 contribute to the active site.

This sequence belongs to the glycosyl hydrolase 22 family. Monomer.

The protein localises to the secreted. It carries out the reaction Hydrolysis of (1-&gt;4)-beta-linkages between N-acetylmuramic acid and N-acetyl-D-glucosamine residues in a peptidoglycan and between N-acetyl-D-glucosamine residues in chitodextrins.. Lysozymes have primarily a bacteriolytic function; those in tissues and body fluids are associated with the monocyte-macrophage system and enhance the activity of immunoagents. In Tragopan temminckii (Temminck's tragopan), this protein is Lysozyme C (LYZ).